The chain runs to 721 residues: MIGKTYTTMLGGRELSIETGRLAKLVSGSVTLRYGDTMLLVTAQAREEKSPLDFLPLTVEFEERHYAVGKIPGSFHRREGRPGEKAILSARITDRQLRPLFPKGYRHETQVIITVLSADQQNAPDVLGPIGASAALSISDIPWGGPTACVRVGQVDGQFIVNPTADQLTRSRMDLVVAGTRDAVMMVEAGAQTVSEEDLVSAIEFAHAEMQGVIDLIERMRAEVGQEKFNFLAEGDLTQDLVPELAEKARAGGIRDALLTTKKKERSARTKAVRDAIIAGYVPDPNAEGAAARIASLKDAYAKVEKQELRRLILEEDLRADGRNGRAVRPIWIEARPLPRAHGSAIFTRGETQVLGVATLGTERDEILVDDLTTEDNDKFMLHYNFPPYSTGEVKRMGGQSRREIGHGHLAKRAIRAVLPSFEEFPYVIRLVGEVLESNGSSSMATVCAGVLALMDAGVPIKAPVAGVAMGLVMEGDKYRVLTDILGLEDALGDMDFKVCGTAEGVTALQMDIKVGGITPQVMREALAQAREGRLHILGKMAEVLSSPRPELSPTAPRIISIKINPELIGKVIGPGGKQVRELEAMGAQVTIEEDGTIRVFSADGAAAEAVRARIAGLTKEAKVGEEYEGTVVKTAPFGAFVNLYAGQDGMLHISQISEERLSAVEDALNVGDKLRVKIAGIDDRGKIDLIRPELEGKIAPREPRAPRGGGDRGPRPPRRD.

Mg(2+) contacts are provided by Asp-490 and Asp-496. Residues 557–623 (PRIISIKINP…RIAGLTKEAK (67 aa)) form the KH domain. Residues 625–693 (GEEYEGTVVK…DRGKIDLIRP (69 aa)) form the S1 motif domain. The interval 693–721 (PELEGKIAPREPRAPRGGGDRGPRPPRRD) is disordered.

The protein belongs to the polyribonucleotide nucleotidyltransferase family. Mg(2+) is required as a cofactor.

It is found in the cytoplasm. The catalysed reaction is RNA(n+1) + phosphate = RNA(n) + a ribonucleoside 5'-diphosphate. In terms of biological role, involved in mRNA degradation. Catalyzes the phosphorolysis of single-stranded polyribonucleotides processively in the 3'- to 5'-direction. The protein is Polyribonucleotide nucleotidyltransferase of Deinococcus deserti (strain DSM 17065 / CIP 109153 / LMG 22923 / VCD115).